Consider the following 205-residue polypeptide: Large ribosomal subunit protein uL4 (205 aa).

Residues 43-96 (GKRQGTSKVKNRSAVRGGGKKPWRQKGTGRARQGSIRSPQWRGGGTVFGPTPRS) are disordered. Basic residues predominate over residues 51–71 (VKNRSAVRGGGKKPWRQKGTG).

This sequence belongs to the universal ribosomal protein uL4 family. As to quaternary structure, part of the 50S ribosomal subunit.

Its function is as follows. One of the primary rRNA binding proteins, this protein initially binds near the 5'-end of the 23S rRNA. It is important during the early stages of 50S assembly. It makes multiple contacts with different domains of the 23S rRNA in the assembled 50S subunit and ribosome. Forms part of the polypeptide exit tunnel. The sequence is that of Large ribosomal subunit protein uL4 from Lactobacillus helveticus (strain DPC 4571).